Here is a 334-residue protein sequence, read N- to C-terminus: Formamidase (334 aa).

Positions 14–260 (FLVAAIQFPV…WEIVTGEIYP (247 aa)) constitute a CN hydrolase domain. E60 acts as the Proton acceptor in catalysis. Residue K133 is the Proton donor of the active site. Residue C166 is the Nucleophile of the active site.

The protein belongs to the carbon-nitrogen hydrolase superfamily. Aliphatic amidase family.

The enzyme catalyses formamide + H2O = formate + NH4(+). Its function is as follows. Is an aliphatic amidase with a restricted substrate specificity, as it only hydrolyzes formamide. In Helicobacter acinonychis (strain Sheeba), this protein is Formamidase.